Here is a 184-residue protein sequence, read N- to C-terminus: (2E)-enoyl-[ACP] glycyltransferase (184 aa).

The protein belongs to the FcoT family.

The catalysed reaction is a (3R)-3-[(carboxymethyl)amino]fatty acid + holo-[ACP] + H(+) = a (2E)-enoyl-[ACP] + glycine + H2O. It catalyses the reaction (3R)-3-[(carboxylmethyl)amino]decanoate + holo-[ACP] + H(+) = (2E)-decenoyl-[ACP] + glycine + H2O. Its function is as follows. Involved in the biosynthesis of a unique class of isonitrile lipopeptides (INLPs) that seem to play a role in metal acquisition in M.marinum. Catalyzes a Michael addition of glycine to the beta-position of an alpha,beta-unsaturated fatty acyl-[ACP], producing a (3R)-3-[(carboxymethyl)amino]fatty acid. Acts on the (2E)-decenoyl moiety loaded on the acyl-carrier protein MmaB, forming the product (3R)-3-[(carboxymethyl)amino]decanoate released from MmaB. In Mycobacterium marinum (strain ATCC BAA-535 / M), this protein is (2E)-enoyl-[ACP] glycyltransferase.